Reading from the N-terminus, the 377-residue chain is UDP-N,N'-diacetylbacillosamine 2-epimerase (hydrolyzing) (377 aa).

The protein belongs to the UDP-N-acetylglucosamine 2-epimerase family.

The catalysed reaction is UDP-N,N'-diacetylbacillosamine + H2O = 2,4-diacetamido-2,4,6-trideoxy-alpha-D-mannopyranose + UDP + H(+). Functionally, involved in biosynthesis of legionaminic acid (5,7-diamino-3,5,7,9-tetradeoxy-D-glycero-D-galacto-non-2-ulosonic acid)(Leg), a sialic acid-like derivative that is incorporated into virulence-associated cell surface glycoconjugates such as lipopolysaccharide (LPS) which could be a key determinant in the ability of L.pneumophila to inhibit the fusion of phagosomes with lysosomes. LPS contains a majority alpha2,4-linked homomer of legionaminic acid. Catalyzes the conversion of UDP-N,N'-diacetylbacillosamine (Bac2Ac4Ac) into 2,4-diacetamido-2,4,6-trideoxymannose and UDP. This chain is UDP-N,N'-diacetylbacillosamine 2-epimerase (hydrolyzing), found in Legionella pneumophila subsp. pneumophila (strain Philadelphia 1 / ATCC 33152 / DSM 7513).